Here is a 481-residue protein sequence, read N- to C-terminus: ATP synthase subunit beta, chloroplastic (481 aa).

161-168 (GGAGVGKT) contacts ATP.

It belongs to the ATPase alpha/beta chains family. As to quaternary structure, F-type ATPases have 2 components, CF(1) - the catalytic core - and CF(0) - the membrane proton channel. CF(1) has five subunits: alpha(3), beta(3), gamma(1), delta(1), epsilon(1). CF(0) has four main subunits: a(1), b(1), b'(1) and c(9-12).

It localises to the plastid. The protein localises to the chloroplast thylakoid membrane. It carries out the reaction ATP + H2O + 4 H(+)(in) = ADP + phosphate + 5 H(+)(out). Its function is as follows. Produces ATP from ADP in the presence of a proton gradient across the membrane. The catalytic sites are hosted primarily by the beta subunits. The polypeptide is ATP synthase subunit beta, chloroplastic (Pylaiella littoralis (Seaweed)).